A 203-amino-acid polypeptide reads, in one-letter code: Cilia- and flagella-associated protein 20 (203 aa).

Belongs to the CFAP20 family.

Its subcellular location is the nucleus. It localises to the cytoplasm. The protein resides in the cytoskeleton. The protein localises to the microtubule organizing center. It is found in the centrosome. Its subcellular location is the centriole. It localises to the cilium basal body. The protein resides in the cilium axoneme. Functionally, cilium- and flagellum-specific protein that plays a role in axonemal structure organization and motility. Microtubule inner protein (MIP) part of the dynein-decorated doublet microtubules (DMTs) in cilia axoneme, which is required for motile cilia beating. Involved in the regulation of the size and morphology of cilia. Required for axonemal microtubules polyglutamylation. The chain is Cilia- and flagella-associated protein 20 from Caenorhabditis briggsae.